A 359-amino-acid polypeptide reads, in one-letter code: Fructose-bisphosphate aldolase class 2 (359 aa).

Serine 50 contacts D-glyceraldehyde 3-phosphate. Residue aspartate 83 is the Proton donor of the active site. Zn(2+) contacts are provided by histidine 84, aspartate 105, glutamate 142, and histidine 198. Residue glycine 199 participates in dihydroxyacetone phosphate binding. Histidine 232 contributes to the Zn(2+) binding site. Dihydroxyacetone phosphate-binding positions include 233–235 (GSS) and 275–278 (NIDT).

Belongs to the class II fructose-bisphosphate aldolase family. Zn(2+) is required as a cofactor.

It catalyses the reaction beta-D-fructose 1,6-bisphosphate = D-glyceraldehyde 3-phosphate + dihydroxyacetone phosphate. The protein operates within carbohydrate degradation; glycolysis; D-glyceraldehyde 3-phosphate and glycerone phosphate from D-glucose: step 4/4. Its function is as follows. Catalyzes the aldol condensation of dihydroxyacetone phosphate (DHAP or glycerone-phosphate) with glyceraldehyde 3-phosphate (G3P) to form fructose 1,6-bisphosphate (FBP) in gluconeogenesis and the reverse reaction in glycolysis. The protein is Fructose-bisphosphate aldolase class 2 (fbaA) of Synechocystis sp. (strain ATCC 27184 / PCC 6803 / Kazusa).